Here is a 647-residue protein sequence, read N- to C-terminus: DNA ligase (647 aa).

NAD(+) contacts are provided by residues 30–34 (DEEYD), 79–80 (SM), and E105. K107 functions as the N6-AMP-lysine intermediate in the catalytic mechanism. NAD(+)-binding residues include R128, E162, and K301. Residues C395, C398, C411, and C416 each coordinate Zn(2+). A BRCT domain is found at 570–647 (KSDGVIFGKT…ESAFNELVKE (78 aa)).

It belongs to the NAD-dependent DNA ligase family. LigA subfamily. The cofactor is Mg(2+). Mn(2+) serves as cofactor.

It carries out the reaction NAD(+) + (deoxyribonucleotide)n-3'-hydroxyl + 5'-phospho-(deoxyribonucleotide)m = (deoxyribonucleotide)n+m + AMP + beta-nicotinamide D-nucleotide.. Functionally, DNA ligase that catalyzes the formation of phosphodiester linkages between 5'-phosphoryl and 3'-hydroxyl groups in double-stranded DNA using NAD as a coenzyme and as the energy source for the reaction. It is essential for DNA replication and repair of damaged DNA. This chain is DNA ligase, found in Campylobacter jejuni (strain RM1221).